A 78-amino-acid chain; its full sequence is Large ribosomal subunit protein bL28 (78 aa).

Positions 1 to 20 (MSRVCQLTGTRANNGMSVSH) are enriched in polar residues. Residues 1-23 (MSRVCQLTGTRANNGMSVSHSHI) form a disordered region.

Belongs to the bacterial ribosomal protein bL28 family.

The polypeptide is Large ribosomal subunit protein bL28 (Prochlorococcus marinus (strain NATL2A)).